The chain runs to 145 residues: Large-conductance mechanosensitive channel (145 aa).

Transmembrane regions (helical) follow at residues 10 to 30 (FALK…GAFA), 41 to 61 (IMPI…MFLI), and 87 to 107 (GNFI…FMMV).

This sequence belongs to the MscL family. As to quaternary structure, homopentamer.

The protein resides in the cell inner membrane. Functionally, channel that opens in response to stretch forces in the membrane lipid bilayer. May participate in the regulation of osmotic pressure changes within the cell. The polypeptide is Large-conductance mechanosensitive channel (Psychrobacter arcticus (strain DSM 17307 / VKM B-2377 / 273-4)).